The primary structure comprises 266 residues: MTGSIWAIVPAAGRGTRFGGPLPKQYLQAGGQPLMAYTLAALAAHPALAGIMVAIAPGDADWPGWTAVQSKPVLTCLGGATRAASVLSGLLALPESVRADDFVLVHDAARPNLALADLDRLLEIGRGDPVGAILAAPVRDTLKRAGDDGGIDGTEPRERLWRALTPQLFRRHQLIRGLTEASAAGVEVTDEAMAMERIGLRPLLVEGAEDNFKVTTPADLARFEFELANRDCGPGTRDPESAHPQSSVSASAFSGPGSRAPGPEEI.

The disordered stretch occupies residues 229 to 266 (NRDCGPGTRDPESAHPQSSVSASAFSGPGSRAPGPEEI). Residues 243 to 252 (HPQSSVSASA) show a composition bias toward polar residues.

It belongs to the IspD/TarI cytidylyltransferase family. IspD subfamily.

The catalysed reaction is 2-C-methyl-D-erythritol 4-phosphate + CTP + H(+) = 4-CDP-2-C-methyl-D-erythritol + diphosphate. The protein operates within isoprenoid biosynthesis; isopentenyl diphosphate biosynthesis via DXP pathway; isopentenyl diphosphate from 1-deoxy-D-xylulose 5-phosphate: step 2/6. Its function is as follows. Catalyzes the formation of 4-diphosphocytidyl-2-C-methyl-D-erythritol from CTP and 2-C-methyl-D-erythritol 4-phosphate (MEP). The polypeptide is 2-C-methyl-D-erythritol 4-phosphate cytidylyltransferase (Xanthomonas axonopodis pv. citri (strain 306)).